The following is a 403-amino-acid chain: Methylthioribose-1-phosphate isomerase (403 aa).

Asp-277 serves as the catalytic Proton donor.

The protein belongs to the eIF-2B alpha/beta/delta subunits family. MtnA subfamily.

It is found in the cytoplasm. The protein resides in the nucleus. It carries out the reaction 5-(methylsulfanyl)-alpha-D-ribose 1-phosphate = 5-(methylsulfanyl)-D-ribulose 1-phosphate. The protein operates within amino-acid biosynthesis; L-methionine biosynthesis via salvage pathway; L-methionine from S-methyl-5-thio-alpha-D-ribose 1-phosphate: step 1/6. In terms of biological role, catalyzes the interconversion of methylthioribose-1-phosphate (MTR-1-P) into methylthioribulose-1-phosphate (MTRu-1-P). The protein is Methylthioribose-1-phosphate isomerase of Lodderomyces elongisporus (strain ATCC 11503 / CBS 2605 / JCM 1781 / NBRC 1676 / NRRL YB-4239) (Yeast).